A 192-amino-acid polypeptide reads, in one-letter code: 3-hydroxyanthranilate 3,4-dioxygenase (192 aa).

Arginine 50 contributes to the O2 binding site. Fe cation-binding residues include histidine 54, glutamate 60, and histidine 102. Glutamate 60 provides a ligand contact to substrate. The substrate site is built by arginine 106 and glutamate 116. Cysteine 131, cysteine 134, cysteine 168, and cysteine 171 together coordinate a divalent metal cation.

The protein belongs to the 3-HAO family. Fe(2+) is required as a cofactor.

It localises to the cytoplasm. It catalyses the reaction 3-hydroxyanthranilate + O2 = (2Z,4Z)-2-amino-3-carboxymuconate 6-semialdehyde. Its pathway is cofactor biosynthesis; NAD(+) biosynthesis; quinolinate from L-kynurenine: step 3/3. Functionally, catalyzes the oxidative ring opening of 3-hydroxyanthranilate to 2-amino-3-carboxymuconate semialdehyde, which spontaneously cyclizes to quinolinate. This is 3-hydroxyanthranilate 3,4-dioxygenase (bna1) from Neosartorya fischeri (strain ATCC 1020 / DSM 3700 / CBS 544.65 / FGSC A1164 / JCM 1740 / NRRL 181 / WB 181) (Aspergillus fischerianus).